The primary structure comprises 426 residues: Fc receptor-like B (426 aa).

The first 17 residues, 1–17 (MWPLTALLLLVPSSGQA), serve as a signal peptide directing secretion. Ig-like C2-type domains follow at residues 23 to 101 (PILS…LSVS) and 103 to 189 (DWLI…VAVT). Cystine bridges form between C44/C85 and C124/C168. An N-linked (GlcNAc...) asparagine glycan is attached at N152. Residues 400-426 (ELRGTPETPTSHFAVSPGTPETTPVES) form a disordered region. Residues 406 to 426 (ETPTSHFAVSPGTPETTPVES) are compositionally biased toward polar residues.

Expressed at low levels. Expressed in B-lymphocytes. Detected in tonsil, lung, kidney, spleen and placenta. Expressed by a small subset of germinal center B-cells in tonsils and by melanocytes (at protein level).

Its subcellular location is the cytoplasm. It localises to the endoplasmic reticulum. This chain is Fc receptor-like B (FCRLB), found in Homo sapiens (Human).